Consider the following 124-residue polypeptide: Large ribosomal subunit protein bL12 (124 aa).

It belongs to the bacterial ribosomal protein bL12 family. In terms of assembly, homodimer. Part of the ribosomal stalk of the 50S ribosomal subunit. Forms a multimeric L10(L12)X complex, where L10 forms an elongated spine to which 2 to 4 L12 dimers bind in a sequential fashion. Binds GTP-bound translation factors.

Its function is as follows. Forms part of the ribosomal stalk which helps the ribosome interact with GTP-bound translation factors. Is thus essential for accurate translation. This is Large ribosomal subunit protein bL12 from Brucella anthropi (strain ATCC 49188 / DSM 6882 / CCUG 24695 / JCM 21032 / LMG 3331 / NBRC 15819 / NCTC 12168 / Alc 37) (Ochrobactrum anthropi).